A 107-amino-acid polypeptide reads, in one-letter code: Death-associated protein-like 1 (107 aa).

A disordered region spans residues 1 to 23; that stretch reads MANEVQDLLSPRKGGHPPAVKAG.

As to expression, expressed in hair follicle (at protein level).

In terms of biological role, may play a role in the early stages of epithelial differentiation or in apoptosis. The protein is Death-associated protein-like 1 (DAPL1) of Homo sapiens (Human).